A 386-amino-acid chain; its full sequence is Succinate--CoA ligase [ADP-forming] subunit beta (386 aa).

The region spanning K9–E244 is the ATP-grasp domain. ATP contacts are provided by residues K46, G53 to G55, E99, A102, and E107. N199 and D213 together coordinate Mg(2+). Residues N264 and G321 to M323 contribute to the substrate site.

The protein belongs to the succinate/malate CoA ligase beta subunit family. As to quaternary structure, heterotetramer of two alpha and two beta subunits. The cofactor is Mg(2+).

The catalysed reaction is succinate + ATP + CoA = succinyl-CoA + ADP + phosphate. It catalyses the reaction GTP + succinate + CoA = succinyl-CoA + GDP + phosphate. The protein operates within carbohydrate metabolism; tricarboxylic acid cycle; succinate from succinyl-CoA (ligase route): step 1/1. Succinyl-CoA synthetase functions in the citric acid cycle (TCA), coupling the hydrolysis of succinyl-CoA to the synthesis of either ATP or GTP and thus represents the only step of substrate-level phosphorylation in the TCA. The beta subunit provides nucleotide specificity of the enzyme and binds the substrate succinate, while the binding sites for coenzyme A and phosphate are found in the alpha subunit. This chain is Succinate--CoA ligase [ADP-forming] subunit beta, found in Delftia acidovorans (strain DSM 14801 / SPH-1).